We begin with the raw amino-acid sequence, 704 residues long: SH3KBP1-binding protein 1 (704 aa).

Ala-2 bears the N-acetylalanine mark. One can recognise a BTB domain in the interval 19-88 (EVIHLNVGGK…LRTKELDPRG (70 aa)). The tract at residues 145 to 165 (LVGPQQAGGRPAPVRRSNTMP) is disordered. Thr-163 carries the post-translational modification Phosphothreonine. WD repeat units lie at residues 233 to 280 (RLDW…GGSE), 283 to 322 (VFHLGVPVEALFFVGNQLIATSHTGRIGVWNAVTKHWQVQ), 324 to 359 (VQPITSYDAAGSFLLLGCNNGSIYYVDVQKFPLRMK), 428 to 466 (VHRSPVTKIMLSEKHLISVCADSNHVRTWSVTRFRGMIS), and 548 to 586 (LECEGSRRLGSRPRRYLLTGQANGSLAMWDLTTAMDGLG). The span at 611 to 644 (ASSRGSLPSPSPRTSLTSLHSAFSNTSLSSRRGS) shows a compositional bias: low complexity. Residues 611-704 (ASSRGSLPSP…PKTKLNETSF (94 aa)) are disordered. The PXXXPR motif lies at 618–623 (PSPSPR). A phosphoserine mark is found at Ser-644 and Ser-646. Positions 678–683 (PTPAPR) match the PXXXPR motif.

This sequence belongs to the KCTD3 family. In terms of assembly, monomer. Interacts with CUL3; interaction is direct and forms a 5:5 heterodecamer. Interacts (via PXXXPR motifs) with SH3KBP1 (via SH3 domains). Directly interacts with cathepsin B/CTSB.

It is found in the lysosome. Its function is as follows. Inhibits CBL-SH3KBP1 complex mediated down-regulation of EGFR signaling by sequestration of SH3KBP1. Binds to SH3KBP1 and prevents its interaction with CBL and inhibits translocation of SH3KBP1 to EGFR containing vesicles upon EGF stimulation. This chain is SH3KBP1-binding protein 1 (SHKBP1), found in Bos taurus (Bovine).